The sequence spans 621 residues: UvrABC system protein C (621 aa).

The region spanning 13–92 (EKPGVYMMRN…IKENRPKYNV (80 aa)) is the GIY-YIG domain. The UVR domain maps to 205–240 (DELVRKIEEKMKAAAISMDFENAARYRDQIIALNNI).

It belongs to the UvrC family. As to quaternary structure, interacts with UvrB in an incision complex.

The protein localises to the cytoplasm. Its function is as follows. The UvrABC repair system catalyzes the recognition and processing of DNA lesions. UvrC both incises the 5' and 3' sides of the lesion. The N-terminal half is responsible for the 3' incision and the C-terminal half is responsible for the 5' incision. This chain is UvrABC system protein C, found in Alkaliphilus oremlandii (strain OhILAs) (Clostridium oremlandii (strain OhILAs)).